The following is a 370-amino-acid chain: tRNA-specific 2-thiouridylase MnmA (370 aa).

Residues 10–17 (AMSGGVDS) and Met36 each bind ATP. The active-site Nucleophile is the Cys111. Cys111 and Cys209 are disulfide-bonded. Gly135 serves as a coordination point for ATP. Residues 159-161 (KDQ) form an interaction with tRNA region. Catalysis depends on Cys209, which acts as the Cysteine persulfide intermediate.

The protein belongs to the MnmA/TRMU family.

Its subcellular location is the cytoplasm. It carries out the reaction S-sulfanyl-L-cysteinyl-[protein] + uridine(34) in tRNA + AH2 + ATP = 2-thiouridine(34) in tRNA + L-cysteinyl-[protein] + A + AMP + diphosphate + H(+). Functionally, catalyzes the 2-thiolation of uridine at the wobble position (U34) of tRNA, leading to the formation of s(2)U34. The polypeptide is tRNA-specific 2-thiouridylase MnmA (Koribacter versatilis (strain Ellin345)).